Reading from the N-terminus, the 151-residue chain is SsrA-binding protein (151 aa).

This sequence belongs to the SmpB family.

The protein localises to the cytoplasm. Functionally, required for rescue of stalled ribosomes mediated by trans-translation. Binds to transfer-messenger RNA (tmRNA), required for stable association of tmRNA with ribosomes. tmRNA and SmpB together mimic tRNA shape, replacing the anticodon stem-loop with SmpB. tmRNA is encoded by the ssrA gene; the 2 termini fold to resemble tRNA(Ala) and it encodes a 'tag peptide', a short internal open reading frame. During trans-translation Ala-aminoacylated tmRNA acts like a tRNA, entering the A-site of stalled ribosomes, displacing the stalled mRNA. The ribosome then switches to translate the ORF on the tmRNA; the nascent peptide is terminated with the 'tag peptide' encoded by the tmRNA and targeted for degradation. The ribosome is freed to recommence translation, which seems to be the essential function of trans-translation. The sequence is that of SsrA-binding protein from Campylobacter concisus (strain 13826).